A 498-amino-acid chain; its full sequence is ATP synthase subunit beta, chloroplastic (498 aa).

172–179 (GGAGVGKT) is an ATP binding site.

Belongs to the ATPase alpha/beta chains family. As to quaternary structure, F-type ATPases have 2 components, CF(1) - the catalytic core - and CF(0) - the membrane proton channel. CF(1) has five subunits: alpha(3), beta(3), gamma(1), delta(1), epsilon(1). CF(0) has four main subunits: a(1), b(1), b'(1) and c(9-12).

The protein resides in the plastid. The protein localises to the chloroplast thylakoid membrane. The enzyme catalyses ATP + H2O + 4 H(+)(in) = ADP + phosphate + 5 H(+)(out). Its function is as follows. Produces ATP from ADP in the presence of a proton gradient across the membrane. The catalytic sites are hosted primarily by the beta subunits. The chain is ATP synthase subunit beta, chloroplastic from Nymphaea odorata (White water lily).